The primary structure comprises 143 residues: Mediator of RNA polymerase II transcription subunit 10 (143 aa).

Residues 123-143 are disordered; the sequence is GAHSNTEISTNPGQKRQGNVS. Positions 124-143 are enriched in polar residues; that stretch reads AHSNTEISTNPGQKRQGNVS.

Belongs to the Mediator complex subunit 10 family. In terms of assembly, component of the Mediator complex.

The protein resides in the nucleus. Functionally, component of the Mediator complex, a coactivator involved in the regulated transcription of nearly all RNA polymerase II-dependent genes. Mediator functions as a bridge to convey information from gene-specific regulatory proteins to the basal RNA polymerase II transcription machinery. Mediator is recruited to promoters by direct interactions with regulatory proteins and serves as a scaffold for the assembly of a functional preinitiation complex with RNA polymerase II and the general transcription factors. This is Mediator of RNA polymerase II transcription subunit 10 (NUT2) from Yarrowia lipolytica (strain CLIB 122 / E 150) (Yeast).